The following is a 221-amino-acid chain: Putative hemin import ATP-binding protein HrtA (221 aa).

One can recognise an ABC transporter domain in the interval 3–221 (LVVEDIVKNF…IELEDGKITD (219 aa)). 39–46 (GASGSGKT) provides a ligand contact to ATP.

It belongs to the ABC transporter superfamily. HrtA family. In terms of assembly, the complex is composed of two ATP-binding proteins (HrtA), two transmembrane proteins (HrtB) and a solute-binding protein.

The protein localises to the cell membrane. Part of the ABC transporter complex hrt involved in hemin import. Responsible for energy coupling to the transport system. The polypeptide is Putative hemin import ATP-binding protein HrtA (hrtA) (Staphylococcus aureus (strain bovine RF122 / ET3-1)).